The sequence spans 571 residues: Proline--tRNA ligase (571 aa).

The protein belongs to the class-II aminoacyl-tRNA synthetase family. ProS type 1 subfamily. In terms of assembly, homodimer.

The protein localises to the cytoplasm. It catalyses the reaction tRNA(Pro) + L-proline + ATP = L-prolyl-tRNA(Pro) + AMP + diphosphate. Catalyzes the attachment of proline to tRNA(Pro) in a two-step reaction: proline is first activated by ATP to form Pro-AMP and then transferred to the acceptor end of tRNA(Pro). As ProRS can inadvertently accommodate and process non-cognate amino acids such as alanine and cysteine, to avoid such errors it has two additional distinct editing activities against alanine. One activity is designated as 'pretransfer' editing and involves the tRNA(Pro)-independent hydrolysis of activated Ala-AMP. The other activity is designated 'posttransfer' editing and involves deacylation of mischarged Ala-tRNA(Pro). The misacylated Cys-tRNA(Pro) is not edited by ProRS. The chain is Proline--tRNA ligase from Vibrio vulnificus (strain CMCP6).